Reading from the N-terminus, the 435-residue chain is Light-independent protochlorophyllide reductase subunit N (435 aa).

Cys-23, Cys-48, and Cys-108 together coordinate [4Fe-4S] cluster.

It belongs to the BchN/ChlN family. As to quaternary structure, protochlorophyllide reductase is composed of three subunits; ChlL, ChlN and ChlB. Forms a heterotetramer of two ChlB and two ChlN subunits. It depends on [4Fe-4S] cluster as a cofactor.

The protein resides in the plastid. It is found in the chloroplast. The enzyme catalyses chlorophyllide a + oxidized 2[4Fe-4S]-[ferredoxin] + 2 ADP + 2 phosphate = protochlorophyllide a + reduced 2[4Fe-4S]-[ferredoxin] + 2 ATP + 2 H2O. Its pathway is porphyrin-containing compound metabolism; chlorophyll biosynthesis (light-independent). In terms of biological role, component of the dark-operative protochlorophyllide reductase (DPOR) that uses Mg-ATP and reduced ferredoxin to reduce ring D of protochlorophyllide (Pchlide) to form chlorophyllide a (Chlide). This reaction is light-independent. The NB-protein (ChlN-ChlB) is the catalytic component of the complex. The polypeptide is Light-independent protochlorophyllide reductase subunit N (Chlorella vulgaris (Green alga)).